A 394-amino-acid chain; its full sequence is Na(+)/H(+) antiporter NhaA (394 aa).

11 helical membrane-spanning segments follow: residues 14–34, 59–79, 95–115, 125–145, 154–174, 179–199, 213–233, 254–274, 292–312, 328–348, and 363–383; these read AGGL…NSAL, LLLW…GLEV, VFPA…YLLF, GWAI…ALLG, VFLL…IALF, VSLQ…YMNW, LVLW…GVIV, GLHP…NAGV, IATG…WLAV, IFAV…IASL, and LGIL…LRLV.

It belongs to the NhaA Na(+)/H(+) (TC 2.A.33) antiporter family.

The protein resides in the cell inner membrane. It catalyses the reaction Na(+)(in) + 2 H(+)(out) = Na(+)(out) + 2 H(+)(in). Its function is as follows. Na(+)/H(+) antiporter that extrudes sodium in exchange for external protons. The protein is Na(+)/H(+) antiporter NhaA of Yersinia pseudotuberculosis serotype O:1b (strain IP 31758).